Reading from the N-terminus, the 471-residue chain is 3-isopropylmalate dehydratase large subunit (471 aa).

Positions 351, 414, and 417 each coordinate [4Fe-4S] cluster.

This sequence belongs to the aconitase/IPM isomerase family. LeuC type 1 subfamily. As to quaternary structure, heterodimer of LeuC and LeuD. Requires [4Fe-4S] cluster as cofactor.

The catalysed reaction is (2R,3S)-3-isopropylmalate = (2S)-2-isopropylmalate. The protein operates within amino-acid biosynthesis; L-leucine biosynthesis; L-leucine from 3-methyl-2-oxobutanoate: step 2/4. Catalyzes the isomerization between 2-isopropylmalate and 3-isopropylmalate, via the formation of 2-isopropylmaleate. This is 3-isopropylmalate dehydratase large subunit from Colwellia psychrerythraea (strain 34H / ATCC BAA-681) (Vibrio psychroerythus).